We begin with the raw amino-acid sequence, 127 residues long: Large ribosomal subunit protein bL20 (127 aa).

It belongs to the bacterial ribosomal protein bL20 family.

Its function is as follows. Binds directly to 23S ribosomal RNA and is necessary for the in vitro assembly process of the 50S ribosomal subunit. It is not involved in the protein synthesizing functions of that subunit. The sequence is that of Large ribosomal subunit protein bL20 (rplT) from Mycoplasma pneumoniae (strain ATCC 29342 / M129 / Subtype 1) (Mycoplasmoides pneumoniae).